The primary structure comprises 207 residues: Large ribosomal subunit protein uL4 (207 aa).

A disordered region spans residues 49–78 (HAVKNRSAVSGGGRKPWRQKGTGRARQGSI).

Belongs to the universal ribosomal protein uL4 family. As to quaternary structure, part of the 50S ribosomal subunit.

In terms of biological role, one of the primary rRNA binding proteins, this protein initially binds near the 5'-end of the 23S rRNA. It is important during the early stages of 50S assembly. It makes multiple contacts with different domains of the 23S rRNA in the assembled 50S subunit and ribosome. Functionally, forms part of the polypeptide exit tunnel. The sequence is that of Large ribosomal subunit protein uL4 from Streptococcus sanguinis (strain SK36).